The chain runs to 464 residues: Protein VAPYRIN-LIKE (464 aa).

The 122-residue stretch at 3–124 (RLVKTEFNEV…RDAVITVILV (122 aa)) folds into the MSP domain. 9 ANK repeats span residues 153-182 (NLTNLMKPAVESGKVEYVTDLITAGGDVNF), 186-215 (NGKSLIPFAIRTGKLAVLKLLVANGCRIND), 217-246 (VDFVLHEAAIIDRVDVVKFLFESFCDELDV), 252-281 (EMMTPIHVSASEGHVSLIEFFVSIGGNANA), 285-314 (RRWTPLHHAASRNHLKAVEFLLENSDVKYA), 318-347 (NGKTAFEIASESGHTRLFGVLRWGDALLQA), 349-368 (RVDDVHALKKCLGEGAEVNR), 372-401 (NGWTPLHWASFKGRIKSVKVLLEHGAEVDS), and 405-435 (AGYTPLHCAAEAGHLQVALVLIAHGGCQTNL).

As to expression, expressed in roots.

Its subcellular location is the cytoplasm. The protein localises to the nucleus. The protein resides in the cell membrane. Functionally, may be involved in arbuscular mycorrhizal (AM) symbiosis with AM fungi and in nitrogen-fixing rhizobial bacteria symbiosis leading to the formation of root nodules. This Medicago truncatula (Barrel medic) protein is Protein VAPYRIN-LIKE.